The primary structure comprises 340 residues: Lipoyl synthase (340 aa).

[4Fe-4S] cluster-binding residues include C83, C88, C94, C109, C113, C116, and S323. Residues 95–312 enclose the Radical SAM core domain; it reads FSGGTATFMI…AEEGYKMGFK (218 aa).

It belongs to the radical SAM superfamily. Lipoyl synthase family. [4Fe-4S] cluster is required as a cofactor.

The protein resides in the cytoplasm. The enzyme catalyses [[Fe-S] cluster scaffold protein carrying a second [4Fe-4S](2+) cluster] + N(6)-octanoyl-L-lysyl-[protein] + 2 oxidized [2Fe-2S]-[ferredoxin] + 2 S-adenosyl-L-methionine + 4 H(+) = [[Fe-S] cluster scaffold protein] + N(6)-[(R)-dihydrolipoyl]-L-lysyl-[protein] + 4 Fe(3+) + 2 hydrogen sulfide + 2 5'-deoxyadenosine + 2 L-methionine + 2 reduced [2Fe-2S]-[ferredoxin]. The protein operates within protein modification; protein lipoylation via endogenous pathway; protein N(6)-(lipoyl)lysine from octanoyl-[acyl-carrier-protein]: step 2/2. Functionally, catalyzes the radical-mediated insertion of two sulfur atoms into the C-6 and C-8 positions of the octanoyl moiety bound to the lipoyl domains of lipoate-dependent enzymes, thereby converting the octanoylated domains into lipoylated derivatives. This is Lipoyl synthase from Pseudomonas fluorescens (strain Pf0-1).